The chain runs to 69 residues: Conopeptide Y-Pl1 (69 aa).

The N-terminal stretch at 1-20 (MSKLGVVLFVFLLLLPLAAP) is a signal peptide. Residues 21–69 (QPVGDQPADQPADRNAEARARFLHPFQYYTLYRYLTRFLHRYPIYYIRY) constitute a propeptide that is removed on maturation.

It belongs to the conotoxin M superfamily. Conopeptide Y family. In terms of tissue distribution, expressed by the venom duct.

It localises to the secreted. Tyrosine-rich conopeptide that targets several channels/receptors that are expressed in Xenopus oocytes. These targets are the voltage-gated potassium channels Kv1.6/KCNA6 (IC(50) is 170 nM) and Kv1.2/KCNA2 (IC(50) is 2.0 uM), Nav1.2/SCN2A (30% of inhibition), and N-methyl-D-aspartate (NMDA) receptor (GRIN1/GRIN2A/GRIN3B and GRIN1/GRIN2B/GRIN3B) (15% of inhibition). In vivo, causes the marine worm N.virens to move very slowly in contrast to control worms, and causes seizures (at 5 nmol) and death (20 nmol) to mice when intracranially injected. The polypeptide is Conopeptide Y-Pl1 (Conus planorbis (Planorbis cone)).